We begin with the raw amino-acid sequence, 605 residues long: ABC transporter E family member 2 (605 aa).

Positions K46 to L75 constitute a 4Fe-4S ferredoxin-type domain. ABC transporter domains follow at residues I70–G315 and I344–L568. ATP contacts are provided by residues G110–S117 and G381–T388.

This sequence belongs to the ABC transporter superfamily. ABCE family. As to expression, expressed in roots, stems, leaves, flowers and siliques.

The protein resides in the membrane. The polypeptide is ABC transporter E family member 2 (ABCE2) (Arabidopsis thaliana (Mouse-ear cress)).